We begin with the raw amino-acid sequence, 186 residues long: UPF0301 protein CGSHiEE_01530 (186 aa).

It belongs to the UPF0301 (AlgH) family.

The chain is UPF0301 protein CGSHiEE_01530 from Haemophilus influenzae (strain PittEE).